A 356-amino-acid chain; its full sequence is D-alanine--D-alanine ligase (356 aa).

Residues 134–339 (KQLFEHRGLP…YPELITKLIE (206 aa)) enclose the ATP-grasp domain. 167 to 222 (NDKLNYPVFVKPANLGSSIGISKCSNEVELKEGIKEAFQFDRKLVIEQGVNAREIE) lines the ATP pocket. Mg(2+) contacts are provided by Asp-293, Glu-306, and Asn-308.

The protein belongs to the D-alanine--D-alanine ligase family. Mg(2+) serves as cofactor. Requires Mn(2+) as cofactor.

The protein resides in the cytoplasm. The enzyme catalyses 2 D-alanine + ATP = D-alanyl-D-alanine + ADP + phosphate + H(+). The protein operates within cell wall biogenesis; peptidoglycan biosynthesis. In terms of biological role, cell wall formation. This chain is D-alanine--D-alanine ligase, found in Staphylococcus aureus (strain MRSA252).